Reading from the N-terminus, the 284-residue chain is UTP--glucose-1-phosphate uridylyltransferase (284 aa).

Belongs to the UDPGP type 2 family.

It carries out the reaction alpha-D-glucose 1-phosphate + UTP + H(+) = UDP-alpha-D-glucose + diphosphate. The protein is UTP--glucose-1-phosphate uridylyltransferase (celA) of Komagataeibacter xylinus (Gluconacetobacter xylinus).